Reading from the N-terminus, the 93-residue chain is Small ribosomal subunit protein uS19 (93 aa).

Positions 74 to 93 are disordered; it reads FSPTRTFRGHVKDDRKSKRR. The span at 83–93 shows a compositional bias: basic and acidic residues; the sequence is HVKDDRKSKRR.

This sequence belongs to the universal ribosomal protein uS19 family.

In terms of biological role, protein S19 forms a complex with S13 that binds strongly to the 16S ribosomal RNA. The polypeptide is Small ribosomal subunit protein uS19 (Streptomyces griseus subsp. griseus (strain JCM 4626 / CBS 651.72 / NBRC 13350 / KCC S-0626 / ISP 5235)).